Consider the following 84-residue polypeptide: Acyl carrier protein (84 aa).

The Carrier domain maps to 4-80 (SETFEKVKKI…EAVDYINNQV (77 aa)). An O-(pantetheine 4'-phosphoryl)serine modification is found at S40.

The protein belongs to the acyl carrier protein (ACP) family. Post-translationally, 4'-phosphopantetheine is transferred from CoA to a specific serine of apo-ACP by AcpS. This modification is essential for activity because fatty acids are bound in thioester linkage to the sulfhydryl of the prosthetic group.

The protein localises to the cytoplasm. It participates in lipid metabolism; fatty acid biosynthesis. Carrier of the growing fatty acid chain in fatty acid biosynthesis. In Nostoc sp. (strain PCC 7120 / SAG 25.82 / UTEX 2576), this protein is Acyl carrier protein.